The primary structure comprises 145 residues: uncharacterized protein (145 aa).

This sequence to B.subtilis XkdJ.

This is an uncharacterized protein from Bacillus subtilis (strain 168).